Consider the following 245-residue polypeptide: Octopine transport system permease protein OccM (245 aa).

Helical transmembrane passes span 12 to 32 (FIALLAGIPLALKLAVFSIAV), 57 to 77 (FYIFAFRGTPLLVQIYIIYYG), 96 to 116 (AYWCALGALALNTAAYSAEIM), 163 to 183 (VLMVKSTSLASTITLMEITGI), and 199 to 219 (ACAGAIYLTMNFIAARLFALI). One can recognise an ABC transmembrane type-1 domain in the interval 19 to 216 (IPLALKLAVF…TMNFIAARLF (198 aa)).

This sequence belongs to the binding-protein-dependent transport system permease family. HisMQ subfamily.

It is found in the cell inner membrane. Functionally, component of the octopine active transport system probably consisting of four subunits: Q, M, P and T. The protein is Octopine transport system permease protein OccM (occM) of Rhizobium meliloti (Ensifer meliloti).